A 292-amino-acid chain; its full sequence is Small ribosomal subunit protein uS3 (292 aa).

Positions 39–110 (IRLEIMKFLK…KISIKIKEVK (72 aa)) constitute a KH type-2 domain. A disordered region spans residues 247–268 (KANERQSRAALNKKDGLSKDET).

It belongs to the universal ribosomal protein uS3 family. In terms of assembly, part of the 30S ribosomal subunit. Forms a tight complex with proteins S10 and S14.

In terms of biological role, binds the lower part of the 30S subunit head. Binds mRNA in the 70S ribosome, positioning it for translation. This chain is Small ribosomal subunit protein uS3, found in Borrelia garinii subsp. bavariensis (strain ATCC BAA-2496 / DSM 23469 / PBi) (Borreliella bavariensis).